Consider the following 104-residue polypeptide: Small ribosomal subunit protein uS10 (104 aa).

Belongs to the universal ribosomal protein uS10 family. As to quaternary structure, part of the 30S ribosomal subunit.

In terms of biological role, involved in the binding of tRNA to the ribosomes. This Helicobacter pylori (strain P12) protein is Small ribosomal subunit protein uS10.